We begin with the raw amino-acid sequence, 125 residues long: Multifunctional methyltransferase subunit TRM112-like protein (125 aa).

One can recognise a TRM112 domain in the interval 2 to 121 (KLFVHNFMSS…RDGIPNMLKV (120 aa)).

This sequence belongs to the TRM112 family.

Its subcellular location is the nucleus. It is found in the nucleoplasm. It localises to the cytoplasm. The protein localises to the perinuclear region. Functionally, acts as an activator of both RNA and protein methyltransferases. The polypeptide is Multifunctional methyltransferase subunit TRM112-like protein (Caenorhabditis elegans).